The primary structure comprises 847 residues: DNA gyrase subunit A (847 aa).

Residues 34–533 enclose the Topo IIA-type catalytic domain; the sequence is LPDVRDGLKP…NYSDINTSDL (500 aa). Tyr122 (O-(5'-phospho-DNA)-tyrosine intermediate) is an active-site residue. The GyrA-box motif lies at 560–566; sequence QKRGGKG.

This sequence belongs to the type II topoisomerase GyrA/ParC subunit family. Heterotetramer, composed of two GyrA and two GyrB chains. In the heterotetramer, GyrA contains the active site tyrosine that forms a transient covalent intermediate with DNA, while GyrB binds cofactors and catalyzes ATP hydrolysis.

Its subcellular location is the cytoplasm. The enzyme catalyses ATP-dependent breakage, passage and rejoining of double-stranded DNA.. Functionally, a type II topoisomerase that negatively supercoils closed circular double-stranded (ds) DNA in an ATP-dependent manner to modulate DNA topology and maintain chromosomes in an underwound state. Negative supercoiling favors strand separation, and DNA replication, transcription, recombination and repair, all of which involve strand separation. Also able to catalyze the interconversion of other topological isomers of dsDNA rings, including catenanes and knotted rings. Type II topoisomerases break and join 2 DNA strands simultaneously in an ATP-dependent manner. The protein is DNA gyrase subunit A of Buchnera aphidicola subsp. Baizongia pistaciae (strain Bp).